The primary structure comprises 337 residues: Protein FAM169B (337 aa).

Residues 278–326 form a disordered region; it reads STVHPKCSEEDTDTPGQASQEDGPTQFNHGESHKEWAVGEPERTQNGRR. Polar residues predominate over residues 291 to 306; the sequence is TPGQASQEDGPTQFNH. The segment covering 307-322 has biased composition (basic and acidic residues); the sequence is GESHKEWAVGEPERTQ.

The protein belongs to the FAM169 family.

This chain is Protein FAM169B (Fam169b), found in Mus musculus (Mouse).